Consider the following 231-residue polypeptide: 7-cyano-7-deazaguanine synthase (231 aa).

8 to 18 (FSGGQDSTTCL) serves as a coordination point for ATP. Cys-188, Cys-197, Cys-200, and Cys-203 together coordinate Zn(2+).

Belongs to the QueC family. The cofactor is Zn(2+).

It carries out the reaction 7-carboxy-7-deazaguanine + NH4(+) + ATP = 7-cyano-7-deazaguanine + ADP + phosphate + H2O + H(+). Its pathway is purine metabolism; 7-cyano-7-deazaguanine biosynthesis. Functionally, catalyzes the ATP-dependent conversion of 7-carboxy-7-deazaguanine (CDG) to 7-cyano-7-deazaguanine (preQ(0)). This Escherichia coli O157:H7 protein is 7-cyano-7-deazaguanine synthase.